Here is a 249-residue protein sequence, read N- to C-terminus: Type III pantothenate kinase (249 aa).

Asp6–Lys13 contacts ATP. Residues Tyr93 and Gly100–Arg103 each bind substrate. The active-site Proton acceptor is Asp102. Asp122 is a binding site for K(+). ATP is bound at residue Thr125. Thr181 contacts substrate.

The protein belongs to the type III pantothenate kinase family. Homodimer. It depends on NH4(+) as a cofactor. Requires K(+) as cofactor.

It localises to the cytoplasm. The enzyme catalyses (R)-pantothenate + ATP = (R)-4'-phosphopantothenate + ADP + H(+). The protein operates within cofactor biosynthesis; coenzyme A biosynthesis; CoA from (R)-pantothenate: step 1/5. In terms of biological role, catalyzes the phosphorylation of pantothenate (Pan), the first step in CoA biosynthesis. The protein is Type III pantothenate kinase of Pseudomonas savastanoi pv. phaseolicola (strain 1448A / Race 6) (Pseudomonas syringae pv. phaseolicola (strain 1448A / Race 6)).